We begin with the raw amino-acid sequence, 341 residues long: Glycerol-3-phosphate dehydrogenase [NAD(P)+] (341 aa).

NADPH contacts are provided by Ser-14, Phe-15, Arg-35, and Lys-108. Positions 108 and 136 each coordinate sn-glycerol 3-phosphate. Position 140 (Ala-140) interacts with NADPH. Sn-glycerol 3-phosphate contacts are provided by Lys-191, Asp-244, Ser-254, Arg-255, and Asn-256. The active-site Proton acceptor is Lys-191. Arg-255 provides a ligand contact to NADPH. NADPH is bound by residues Val-279 and Glu-281.

It belongs to the NAD-dependent glycerol-3-phosphate dehydrogenase family.

Its subcellular location is the cytoplasm. It catalyses the reaction sn-glycerol 3-phosphate + NAD(+) = dihydroxyacetone phosphate + NADH + H(+). It carries out the reaction sn-glycerol 3-phosphate + NADP(+) = dihydroxyacetone phosphate + NADPH + H(+). It functions in the pathway membrane lipid metabolism; glycerophospholipid metabolism. Its function is as follows. Catalyzes the reduction of the glycolytic intermediate dihydroxyacetone phosphate (DHAP) to sn-glycerol 3-phosphate (G3P), the key precursor for phospholipid synthesis. In Pseudomonas syringae pv. tomato (strain ATCC BAA-871 / DC3000), this protein is Glycerol-3-phosphate dehydrogenase [NAD(P)+].